The following is a 242-amino-acid chain: Dihydropteridine reductase (242 aa).

12-36 (LVYGGRGALGSRCVQAFRARNWWVA) contributes to the NADP(+) binding site. N6-succinyllysine occurs at positions 71, 77, 94, and 100. The active-site Proton acceptor is Y148.

The protein belongs to the short-chain dehydrogenases/reductases (SDR) family. Homodimer.

The enzyme catalyses 5,6,7,8-tetrahydropteridine + NAD(+) = 6,7-dihydropteridine + NADH + H(+). It catalyses the reaction 5,6,7,8-tetrahydropteridine + NADP(+) = 6,7-dihydropteridine + NADPH + H(+). In terms of biological role, catalyzes the conversion of quinonoid dihydrobiopterin into tetrahydrobiopterin. This chain is Dihydropteridine reductase (QDPR), found in Bos taurus (Bovine).